The chain runs to 468 residues: Heat stress transcription factor A-1e (468 aa).

The DNA-binding element occupies 21 to 115 (IPPFLSKTYD…ILKSIVRRKP (95 aa)). Residues 133–199 (ACVEVGKFGL…QMMSFLAKAV (67 aa)) are hydrophobic repeat HR-A/B. Positions 211 to 220 (QSNEANQHIS) are enriched in polar residues. Disordered stretches follow at residues 211-244 (QSNE…VNGL) and 268-309 (QMSN…PEVT). The Nuclear localization signal signature appears at 223 to 227 (NKKRR). Over residues 277 to 305 (SLSSNNGSFLLGDVPNSNISDNGSSSNGS) the composition is skewed to low complexity. Residues 402 to 411 (DSFWEQFIGE) carry the AHA motif. A Nuclear export signal motif is present at residues 454 to 461 (LTEQMGLL).

Belongs to the HSF family. Class A subfamily. Homotrimer. Exhibits temperature-dependent phosphorylation.

Its subcellular location is the cytoplasm. It is found in the nucleus. Transcriptional activator that specifically binds DNA sequence 5'-AGAAnnTTCT-3' known as heat shock promoter elements (HSE). This is Heat stress transcription factor A-1e (HSFA1E) from Arabidopsis thaliana (Mouse-ear cress).